The chain runs to 60 residues: Large ribosomal subunit protein uL30 (60 aa).

The protein belongs to the universal ribosomal protein uL30 family. In terms of assembly, part of the 50S ribosomal subunit.

The sequence is that of Large ribosomal subunit protein uL30 from Dechloromonas aromatica (strain RCB).